Consider the following 369-residue polypeptide: MVNMEICAMDCCVFKGLLAERAHKCLILDCRSFFAFSSSSIIGSSNVRLSTIVKRRAKGSMGLEHIIPNEEQRGRLVAGMYEAVVLLDERTSELDMLRKDSTMMLAVNALSRDPRGSRIYFLKGGYETFSSQCPEFCNKNSPPVALSLPLSPNNVPGSADSNCTPCGTPLYDQGGPVEILPFLYLGSAYHASRKDMLEALGITALINVSANCPNHFEGHFQYKSIPVEDSHKADISSWFNEAIDFIDSIKTCGGRVFVHCQAGISRSATICLAYLMRTNRVKLDEAFEFVKQRRSIISPNFSFMGQLLQFESQVLAPSCSAEAGSPTISVLDRGTSTTTVFNFPVSIPVHSGANSLSYLQNPITTSPSC.

The Rhodanese domain maps to 21 to 138 (RAHKCLILDC…FSSQCPEFCN (118 aa)). Phosphothreonine; by MAPK1 is present on threonine 168. The Tyrosine-protein phosphatase domain maps to 175-316 (GPVEILPFLY…LLQFESQVLA (142 aa)). The Phosphocysteine intermediate role is filled by cysteine 260.

The protein belongs to the protein-tyrosine phosphatase family. Non-receptor class dual specificity subfamily. In terms of processing, phosphorylated by MAPK1/ERK2 at Thr-168 and at one or more serine residues in a progesterone-dependent manner. Phosphorylation reduces its rate of degradation but does not seem to affect phosphatase activity.

It localises to the nucleus. It catalyses the reaction O-phospho-L-seryl-[protein] + H2O = L-seryl-[protein] + phosphate. The enzyme catalyses O-phospho-L-threonyl-[protein] + H2O = L-threonyl-[protein] + phosphate. The catalysed reaction is O-phospho-L-tyrosyl-[protein] + H2O = L-tyrosyl-[protein] + phosphate. Dual specificity phosphatase that dephosphorylates MAP kinase MAPK1/ERK2 on both 'Thr-188' and 'Tyr-190', regulating its activity during the meiotic cell cycle. This chain is Dual specificity protein phosphatase 1-B, found in Xenopus laevis (African clawed frog).